Reading from the N-terminus, the 490-residue chain is Subtilisin-like protease 8 (490 aa).

A signal peptide spans 1–26 (MKGLLSLSVLPVLAYASPMIVDSIHQ). The propeptide occupies 27–134 (NAAPILSSTN…YIERDSEVHT (108 aa)). In terms of domain architecture, Inhibitor I9 spans 43–134 (SYIVVFKKGV…YIERDSEVHT (92 aa)). A Peptidase S8 domain is found at 144–450 (PWGLARISHR…GGSDDYKKII (307 aa)). Residues aspartate 180 and histidine 212 each act as charge relay system in the active site. Asparagine 282 carries an N-linked (GlcNAc...) asparagine glycan. Residue serine 378 is the Charge relay system of the active site. Asparagine 456 is a glycosylation site (N-linked (GlcNAc...) asparagine).

Belongs to the peptidase S8 family.

Its subcellular location is the secreted. Secreted subtilisin-like serine protease with keratinolytic activity that contributes to pathogenicity. This Arthroderma benhamiae (strain ATCC MYA-4681 / CBS 112371) (Trichophyton mentagrophytes) protein is Subtilisin-like protease 8 (SUB8).